The following is a 528-amino-acid chain: GMP synthase [glutamine-hydrolyzing] (528 aa).

One can recognise a Glutamine amidotransferase type-1 domain in the interval 13–204; the sequence is SILILDFGSQ…VYSIAKCKAD (192 aa). Residue cysteine 90 is the Nucleophile of the active site. Active-site residues include histidine 178 and glutamate 180. The GMPS ATP-PPase domain occupies 205-403; that stretch reads WTTETFLEET…LGLPDEIIKR (199 aa). 232–238 contacts ATP; the sequence is SGGVDSS.

As to quaternary structure, homodimer.

It carries out the reaction XMP + L-glutamine + ATP + H2O = GMP + L-glutamate + AMP + diphosphate + 2 H(+). It participates in purine metabolism; GMP biosynthesis; GMP from XMP (L-Gln route): step 1/1. In terms of biological role, catalyzes the synthesis of GMP from XMP. This Prochlorococcus marinus subsp. pastoris (strain CCMP1986 / NIES-2087 / MED4) protein is GMP synthase [glutamine-hydrolyzing].